A 623-amino-acid polypeptide reads, in one-letter code: Dynein axonemal intermediate chain 2 (623 aa).

WD repeat units lie at residues 214-254 (KPLS…LVAE), 261-302 (SHRD…EPIE), 362-401 (GHHGPIYALQRNPFYPKNFLTVGDWTARIWSEDSRESSIM), 405-445 (YHMA…CDPA), and 450-489 (VCDDPLFCLRVQDNGCLIACGSELGTTTLLEVSSSLSTLQ). The tract at residues 565-602 (AEALKKKPKPRKKSSVKVEAEEEVEENVGEEEEAGGII) is disordered. Over residues 570 to 579 (KKPKPRKKSS) the composition is skewed to basic residues. A compositionally biased stretch (acidic residues) spans 584 to 598 (AEEEVEENVGEEEEA).

Belongs to the dynein intermediate chain family. In terms of assembly, consists of at least two heavy chains and a number of intermediate and light chains. Interacts with DNAAF2. Interacts with DNAAF6/PIH1D3. Interacts with HEATR2; probably involved in outer arm dynein assembly. Interacts with CFAP53. In terms of tissue distribution, predominantly expressed in ovary, testis and lung.

The protein localises to the cytoplasm. Its subcellular location is the cytoskeleton. It is found in the cilium axoneme. The protein resides in the dynein axonemal particle. Its function is as follows. Part of the dynein complex of respiratory cilia. This chain is Dynein axonemal intermediate chain 2 (Dnai2), found in Mus musculus (Mouse).